A 374-amino-acid polypeptide reads, in one-letter code: MGAAKNIWALANAEDAANDAEQIPYSSFVVDTSLPLPLMIPRIIELCKDLFKNWGELDDSLFSVERVSGGITNLLLKVSVKEDTNKEVSVTVRLYGPNTEYVINREREILAIKYLSAAGFGAKLLGGFGNGMVQSFINARTLEPSDMREPKIAAQIARELGKFHKVDIPGSKEPQLWVDILKFYEKASTLTFEEPDKQKLFETISFEELHKEIIELREFTGLLNAPVVFAHNDLLSGNFMLNDEEEKLYLIDFEYGSYNYRGFDIGNHFNEYAGYDCDYSLYPSKEEQYHFIKHYLQPDKPDEVSIAEVESVFVETDAYKLASHLYWAIWAIIQARMSPIEFEYLGYFFLRYNEYKKQKPLTFSLVTSHLSASL.

Residues arginine 93 and aspartate 252 each contribute to the ATP site.

This sequence belongs to the choline/ethanolamine kinase family.

The enzyme catalyses ethanolamine + ATP = phosphoethanolamine + ADP + H(+). It participates in phospholipid metabolism; phosphatidylethanolamine biosynthesis; phosphatidylethanolamine from ethanolamine: step 1/3. Its function is as follows. Involved in phospholipid biosynthesis. Catalyzes the first step in phosphatidylethanolamine biosynthesis. The polypeptide is Probable ethanolamine kinase (EMB1187) (Arabidopsis thaliana (Mouse-ear cress)).